The following is a 149-amino-acid chain: uncharacterized protein (149 aa).

In terms of domain architecture, HotDog ACOT-type spans 16–128; the sequence is PAGEPAIRVI…LFTFVAIDED (113 aa).

Belongs to the acyl coenzyme A hydrolase family.

This is an uncharacterized protein from Zymomonas mobilis subsp. mobilis (strain ATCC 31821 / ZM4 / CP4).